Reading from the N-terminus, the 367-residue chain is 2-aminoethylphosphonate--pyruvate transaminase (367 aa).

Lys-194 bears the N6-(pyridoxal phosphate)lysine mark.

This sequence belongs to the class-V pyridoxal-phosphate-dependent aminotransferase family. PhnW subfamily. In terms of assembly, homodimer. Pyridoxal 5'-phosphate is required as a cofactor.

The catalysed reaction is (2-aminoethyl)phosphonate + pyruvate = phosphonoacetaldehyde + L-alanine. Functionally, involved in phosphonate degradation. This Salmonella paratyphi A (strain ATCC 9150 / SARB42) protein is 2-aminoethylphosphonate--pyruvate transaminase.